The chain runs to 722 residues: D-(-)-3-hydroxybutyrate oligomer hydrolase (722 aa).

A signal peptide spans 1–25; it reads MKTMQGKGSGRRLRGALLVTMAASG. The active-site Charge relay system is serine 319.

Belongs to the D-(-)-3-hydroxybutyrate oligomer hydrolase family.

Its subcellular location is the secreted. The enzyme catalyses (3R)-hydroxybutanoate dimer + H2O = 2 (R)-3-hydroxybutanoate + H(+). The protein operates within lipid metabolism; butanoate metabolism. Its activity is regulated as follows. Inhibited by diisopropylfluorophosphate (DFP). Participates in the degradation of poly-3-hydroxybutyrate (PHB). It works downstream of poly(3-hydroxybutyrate) depolymerase, hydrolyzing D(-)-3-hydroxybutyrate oligomers of various length (3HB-oligomers) into 3HB-monomers. This Ralstonia pickettii (Burkholderia pickettii) protein is D-(-)-3-hydroxybutyrate oligomer hydrolase.